Consider the following 305-residue polypeptide: MIKQRTLKRIVQATGVGLHTGKKVTLTLRPAPANTGVIYRRTDLNPPVDFPADAKSVRDTMLCTCLVNEHDVRISTVEHLNAALAGLGIDNIVIEVNAPEIPIMDGSAAPFVYLLLDAGIDELNCAKKFVRIKETVRVEDGDKWAEFRPYNGFTLDFTIDFSHPAIDSSSQRYAMNFSADAFMRQISRARTFGFMRDIEYLQSRGLCLGGSFDCAIVVDDYRVLNEDGLRFEDEFVRHKMLDAIGDLFMCGHNIIGAFTAYKSGHALNNKLLQAVLAKQEAWEFVTFQDDAELPLAFKAPSTVLA.

Zn(2+)-binding residues include H79, H238, and D242. H265 (proton donor) is an active-site residue.

It belongs to the LpxC family. The cofactor is Zn(2+).

It carries out the reaction a UDP-3-O-[(3R)-3-hydroxyacyl]-N-acetyl-alpha-D-glucosamine + H2O = a UDP-3-O-[(3R)-3-hydroxyacyl]-alpha-D-glucosamine + acetate. The protein operates within glycolipid biosynthesis; lipid IV(A) biosynthesis; lipid IV(A) from (3R)-3-hydroxytetradecanoyl-[acyl-carrier-protein] and UDP-N-acetyl-alpha-D-glucosamine: step 2/6. Functionally, catalyzes the hydrolysis of UDP-3-O-myristoyl-N-acetylglucosamine to form UDP-3-O-myristoylglucosamine and acetate, the committed step in lipid A biosynthesis. The polypeptide is UDP-3-O-acyl-N-acetylglucosamine deacetylase (Salmonella paratyphi A (strain ATCC 9150 / SARB42)).